A 321-amino-acid chain; its full sequence is Probable arabinan endo-1,5-alpha-L-arabinosidase A (321 aa).

The first 19 residues, 1-19, serve as a signal peptide directing secretion; that stretch reads MYRLLSVASVPLLASLVHG. Catalysis depends on Asp-34, which acts as the Proton acceptor. Residue Glu-200 is the Proton donor of the active site. Asn-295 carries N-linked (GlcNAc...) asparagine glycosylation.

This sequence belongs to the glycosyl hydrolase 43 family.

The protein resides in the secreted. The enzyme catalyses Endohydrolysis of (1-&gt;5)-alpha-arabinofuranosidic linkages in (1-&gt;5)-arabinans.. The protein operates within glycan metabolism; L-arabinan degradation. Its function is as follows. Endo-1,5-alpha-L-arabinanase involved in degradation of pectin. Its preferred substrate is linear 1,5-alpha-L-arabinan. The polypeptide is Probable arabinan endo-1,5-alpha-L-arabinosidase A (abnA) (Aspergillus niger (strain ATCC MYA-4892 / CBS 513.88 / FGSC A1513)).